The following is a 589-amino-acid chain: Threonine--tRNA ligase (589 aa).

The interval 191–487 is catalytic; it reads DHRKIGKNLG…LLEQTKGNFP (297 aa). Residues Cys284, His335, and His464 each contribute to the Zn(2+) site.

The protein belongs to the class-II aminoacyl-tRNA synthetase family. Homodimer. The cofactor is Zn(2+).

The protein resides in the cytoplasm. The enzyme catalyses tRNA(Thr) + L-threonine + ATP = L-threonyl-tRNA(Thr) + AMP + diphosphate + H(+). Its function is as follows. Catalyzes the attachment of threonine to tRNA(Thr) in a two-step reaction: L-threonine is first activated by ATP to form Thr-AMP and then transferred to the acceptor end of tRNA(Thr). Also edits incorrectly charged L-seryl-tRNA(Thr). In Mycoplasmopsis pulmonis (strain UAB CTIP) (Mycoplasma pulmonis), this protein is Threonine--tRNA ligase.